The following is a 287-amino-acid chain: Pantothenate synthetase (287 aa).

Residue 30 to 37 coordinates ATP; sequence MGNLHSGH. The Proton donor role is filled by His-37. Gln-61 provides a ligand contact to (R)-pantoate. Residue Gln-61 participates in beta-alanine binding. Residue 149-152 participates in ATP binding; it reads GEKD. Gln-155 is a (R)-pantoate binding site. ATP-binding positions include Val-178 and 186–189; that span reads LSSR.

Belongs to the pantothenate synthetase family. In terms of assembly, homodimer.

It is found in the cytoplasm. The enzyme catalyses (R)-pantoate + beta-alanine + ATP = (R)-pantothenate + AMP + diphosphate + H(+). It functions in the pathway cofactor biosynthesis; (R)-pantothenate biosynthesis; (R)-pantothenate from (R)-pantoate and beta-alanine: step 1/1. In terms of biological role, catalyzes the condensation of pantoate with beta-alanine in an ATP-dependent reaction via a pantoyl-adenylate intermediate. The sequence is that of Pantothenate synthetase from Pseudomonas putida (strain ATCC 47054 / DSM 6125 / CFBP 8728 / NCIMB 11950 / KT2440).